Consider the following 428-residue polypeptide: ETS domain-containing protein Elk-1 (428 aa).

A DNA-binding region (ETS) is located at residues 5–86; that stretch reads VTLWQFLLQL…SGQKFVYKFV (82 aa). Disordered regions lie at residues 121-149, 165-205, and 228-358; these read AAPG…ARSS, QSLQ…SPLE, and NLKS…SLLP. Low complexity predominate over residues 177 to 205; it reads PAVVLPSAAPAGAAAPPSGSRSTSPSPLE. Residues Lys230, Lys249, and Lys254 each participate in a glycyl lysine isopeptide (Lys-Gly) (interchain with G-Cter in SUMO) cross-link. Basic and acidic residues predominate over residues 248-261; the sequence is VKVEGPKEELEVAG. The residue at position 324 (Ser324) is a Phosphoserine; by MAPK1. Thr336, Thr353, Thr363, and Thr368 each carry phosphothreonine; by MAPK1. A sufficient for interaction with MAD2L2 region spans residues 349–399; it reads GPALTPSLLPTHTLTPVLLTPSSLPPSIHFWSTLSPIAPRSPAKLSFQFPS. A glycan (O-linked (GlcNAc) threonine) is linked at Thr381. A Phosphoserine; by MAPK1 and MAPK8 modification is found at Ser383. At Ser389 the chain carries Phosphoserine; by MAPK1. At Thr417 the chain carries Phosphothreonine; by MAPK1. Ser422 bears the Phosphoserine; by MAPK1 mark.

It belongs to the ETS family. As to quaternary structure, interacts in its sumoylated form with PIAS2/PIASX which enhances its transcriptional activator activity. Interacts with MAD2L2; the interaction is direct and promotes phosphorylation by the kinases MAPK8 and/or MAPK9. Interacts with POU1F1. In terms of processing, sumoylation represses transcriptional activator activity as it results in recruitment of HDAC2 to target gene promoters which leads to decreased histone acetylation and reduced transactivator activity. It also regulates nuclear retention. On mitogenic stimulation, phosphorylated on C-terminal serine and threonine residues by MAPK1. Ser-383 and Ser-389 are the preferred sites for MAPK1. In vitro, phosphorylation by MAPK1 potentiates ternary complex formation with the serum responses factors, SRE and SRF. Also phosphorylated on Ser-383 by MAPK8 and/or MAKP9. Phosphorylation leads to loss of sumoylation and restores transcriptional activator activity. Phosphorylated and activated by CAMK4, MAPK11, MAPK12 and MAPK14. Upon bFGF stimulus, phosphorylated by PAK1. Phosphorylated by PRP4K at Thr-417; phosphorylation activation ELK1 transcriptional activity. As to expression, lung and testis.

The protein resides in the nucleus. Transcription factor that binds to purine-rich DNA sequences. Forms a ternary complex with SRF and the ETS and SRF motifs of the serum response element (SRE) on the promoter region of immediate early genes such as FOS and IER2. Induces target gene transcription upon JNK and MAPK-signaling pathways stimulation. This chain is ETS domain-containing protein Elk-1, found in Homo sapiens (Human).